We begin with the raw amino-acid sequence, 436 residues long: GTPase Der (436 aa).

EngA-type G domains lie at 4-167 and 175-351; these read PTVA…PVEE and IRFS…ESQN. Residues 10–17, 57–61, 119–122, 181–188, 229–233, and 294–297 each bind GTP; these read GRPNVGKS, DTGGI, NKVD, DTAGM, and NKWD. The KH-like domain maps to 352 to 436; it reads KRIPSAVLND…PIHLIARKRK (85 aa).

This sequence belongs to the TRAFAC class TrmE-Era-EngA-EngB-Septin-like GTPase superfamily. EngA (Der) GTPase family. In terms of assembly, associates with the 50S ribosomal subunit.

Functionally, GTPase that plays an essential role in the late steps of ribosome biogenesis. The sequence is that of GTPase Der from Streptococcus uberis (strain ATCC BAA-854 / 0140J).